Here is a 726-residue protein sequence, read N- to C-terminus: uncharacterized protein (726 aa).

Residues 10-135 enclose the Thioredoxin domain; that stretch reads MRISWVVAFI…LLDFVETHLN (126 aa). 2 disordered regions span residues 133-153 and 227-280; these read HLNP…TDED and VTSV…NPTG. The segment covering 138 to 153 has biased composition (acidic residues); sequence TDPDIPSDEDVLTDED. The helical transmembrane segment at 675–695 threads the bilayer; sequence IRVLYMVLGIVTVGILVWYFS. A Phosphoserine modification is found at Ser708.

Its subcellular location is the membrane. This is an uncharacterized protein from Schizosaccharomyces pombe (strain 972 / ATCC 24843) (Fission yeast).